The primary structure comprises 516 residues: Glycosyl hydrolase family 109 protein 4 (516 aa).

The signal sequence occupies residues 1 to 18 (MKKIKLLLVAGACVVLSA). A lipid anchor (N-palmitoyl cysteine) is attached at C19. C19 carries the S-diacylglycerol cysteine lipid modification. NAD(+) is bound by residues 76–77 (MR), D98, 146–149 (WLHH), 166–167 (EV), and N195. Residues Y224, R247, 259 to 262 (YATH), and Y337 contribute to the substrate site. Y259 lines the NAD(+) pocket.

Belongs to the Gfo/Idh/MocA family. Glycosyl hydrolase 109 subfamily. It depends on NAD(+) as a cofactor.

It is found in the cell membrane. Glycosidase. This is Glycosyl hydrolase family 109 protein 4 from Phocaeicola vulgatus (strain ATCC 8482 / DSM 1447 / JCM 5826 / CCUG 4940 / NBRC 14291 / NCTC 11154) (Bacteroides vulgatus).